A 45-amino-acid polypeptide reads, in one-letter code: Defensin Tk-AMP-D4 (45 aa).

Intrachain disulfides connect Cys3/Cys45, Cys14/Cys34, Cys20/Cys39, and Cys24/Cys41.

In terms of biological role, plant defense peptide. This chain is Defensin Tk-AMP-D4, found in Triticum kiharae (Wheat).